Consider the following 239-residue polypeptide: Ribose-5-phosphate isomerase A (239 aa).

Residues 40 to 43, 96 to 99, and 110 to 113 contribute to the substrate site; these read SGST, DGAD, and KGGG. Residue E119 is the Proton acceptor of the active site. K137 contacts substrate.

It belongs to the ribose 5-phosphate isomerase family. Homodimer.

It carries out the reaction aldehydo-D-ribose 5-phosphate = D-ribulose 5-phosphate. It functions in the pathway carbohydrate degradation; pentose phosphate pathway; D-ribose 5-phosphate from D-ribulose 5-phosphate (non-oxidative stage): step 1/1. Catalyzes the reversible conversion of ribose-5-phosphate to ribulose 5-phosphate. This Methanococcus maripaludis (strain DSM 14266 / JCM 13030 / NBRC 101832 / S2 / LL) protein is Ribose-5-phosphate isomerase A.